A 594-amino-acid polypeptide reads, in one-letter code: Choline dehydrogenase, mitochondrial (594 aa).

Residues M1 to A29 constitute a mitochondrion transit peptide. Position 42-71 (S42–E71) interacts with FAD. At K436 the chain carries N6-succinyllysine. An N6-acetyllysine; alternate mark is found at K484 and K496. N6-succinyllysine; alternate is present on residues K484 and K496. The active-site Proton acceptor is the H511. K580 carries the N6-acetyllysine modification.

It belongs to the GMC oxidoreductase family. FAD serves as cofactor.

It is found in the mitochondrion inner membrane. It catalyses the reaction choline + A = betaine aldehyde + AH2. It functions in the pathway amine and polyamine biosynthesis; betaine biosynthesis via choline pathway; betaine aldehyde from choline (cytochrome c reductase route): step 1/1. This Homo sapiens (Human) protein is Choline dehydrogenase, mitochondrial (CHDH).